Consider the following 897-residue polypeptide: Cytokine receptor common subunit beta (897 aa).

Residues 1 to 16 form the signal peptide; it reads MVLAQGLLSMALLALC. The Extracellular segment spans residues 17–443; sequence WERSLAGAEE…WDTESVLPMW (427 aa). The cysteines at positions 35 and 45 are disulfide-linked. N-linked (GlcNAc...) asparagine glycosylation occurs at Asn58. Intrachain disulfides connect Cys75–Cys96 and Cys86–Cys91. The Fibronectin type-III 1 domain occupies 133–240; the sequence is PPEPRDLQIS…PEVCWDSQPG (108 aa). A glycan (N-linked (GlcNAc...) asparagine) is linked at Asn191. 2 disulfide bridges follow: Cys250/Cys260 and Cys289/Cys306. A Fibronectin type-III 2 domain is found at 339-436; sequence QMAPPSLNVT…EWSEARSWDT (98 aa). Asn346 is a glycosylation site (N-linked (GlcNAc...) asparagine). Positions 425–429 match the WSXWS motif motif; it reads WSEWS. Residues 444 to 460 form a helical membrane-spanning segment; the sequence is VLALIVIFLTIAVLLAL. At 461–897 the chain is on the cytoplasmic side; it reads RFCGIYGYRL…WEVNKPGEVC (437 aa). Residues 474-482 carry the Box 1 motif motif; the sequence is WEEKIPNPS. Disordered stretches follow at residues 498-517, 532-630, 648-812, and 830-849; these read GSMSAFTSGSPPHQGPWGSR, SEVS…EYLC, PGQA…QPEG, and PGPLSLRSKPSSPGPGPEIK. Residues 564–574 show a composition bias toward pro residues; sequence EQPPSPQPGPP. Low complexity predominate over residues 723 to 752; that stretch reads SGASSVSLVPSLGLPSDQTPSLCPGLASGP. Phosphotyrosine is present on Tyr766. Over residues 830–840 the composition is skewed to low complexity; the sequence is PGPLSLRSKPS.

This sequence belongs to the type I cytokine receptor family. Type 4 subfamily. Heterodimer of an alpha and a beta subunit. The beta subunit is common to the IL3, IL5 and GM-CSF receptors. The signaling GM-CSF receptor complex is a dodecamer of two head-to-head hexamers of two alpha, two beta, and two ligand subunits. Interacts with TMEM102; this interaction occurs preferentially in the absence of CSF2. Interacts with FCER1G; this interaction is direct. Interacts with LYN. Interacts with JAK1. Post-translationally, may be phosphorylated by LYN.

It localises to the membrane. Cell surface receptor that plays a role in immune response and controls the production and differentiation of hematopoietic progenitor cells into lineage-restricted cells. Acts by forming an heterodimeric receptor through interaction with different partners such as IL3RA, IL5RA or CSF2RA. In turn, participates in various signaling pathways including interleukin-3, interleukin-5 and granulocyte-macrophage colony-stimulating factor/CSF2 pathways. In unstimulated conditions, interacts constitutively with JAK1 and ligand binding leads to JAK1 stimulation and subsequent activation of the JAK-STAT pathway. The sequence is that of Cytokine receptor common subunit beta (CSF2RB) from Homo sapiens (Human).